The sequence spans 979 residues: Ankycorbin (979 aa).

Methionine 1 is modified (N-acetylmethionine). Serine 11 carries the post-translational modification Phosphoserine. ANK repeat units lie at residues 18 to 51, 52 to 81, 85 to 114, 118 to 147, 151 to 180, 184 to 213, and 217 to 247; these read KNDD…KHDS, EGKT…DVTA, SGHS…PAEN, SGKT…PINL, DGNI…DVNS, NGRT…DLSL, and LGHN…DADL. Residues 247-259 are compositionally biased toward basic and acidic residues; the sequence is LKTPTKPKQHDQV. Residues 247-299 are disordered; the sequence is LKTPTKPKQHDQVSKISSERSGTPKKRKAPPPPISPTQLSDVSSPRSITSTPL. A Phosphothreonine modification is found at threonine 249. Positions 270 to 276 match the Nuclear localization signal motif; sequence PKKRKAP. Phosphoserine occurs at positions 281, 286, and 293. Residues 282–299 are compositionally biased toward polar residues; the sequence is PTQLSDVSSPRSITSTPL. A phosphothreonine mark is found at threonine 295 and threonine 297. Serine 300, serine 304, serine 318, serine 327, serine 329, serine 340, serine 341, and serine 358 each carry phosphoserine. A coiled-coil region spans residues 349 to 374; it reads LVLLQAKVASLTLHNKELQDKLQAKS. 2 disordered regions span residues 392 to 429 and 446 to 467; these read TQTD…TDND and LESS…RTDT. Positions 430-943 form a coiled coil; that stretch reads VIIRQLQDSL…CKKHHQEVIS (514 aa). Positions 446-457 are enriched in basic and acidic residues; the sequence is LESSEAEKKQLQ. Residues 458–467 are compositionally biased toward polar residues; the sequence is DELQSQRTDT. 5 positions are modified to phosphoserine: serine 513, serine 516, serine 667, serine 694, and serine 914.

In terms of assembly, interacts with PALLD. Associates with actin. However, does not bind F-actin directly. As to expression, highly expressed in testis, where it localizes to seminiferous tubules (at protein level). Expressed in ganglion cell layer and in Muller cell fibers of the retina (at protein level). In small intestine highly expressed at the apical and lateral borders of absorptive epithelia (at protein level). In liver highly expressed along the bile canaliculi (at protein level).

Its subcellular location is the cytoplasm. It is found in the cytoskeleton. The protein localises to the stress fiber. It localises to the cell cortex. The protein resides in the cell junction. Its subcellular location is the nucleus. In terms of biological role, plays a role in actin regulation at the ectoplasmic specialization, a type of cell junction specific to testis. Important for establishment of sperm polarity and normal spermatid adhesion. May also promote integrity of Sertoli cell tight junctions at the blood-testis barrier. The chain is Ankycorbin (Rai14) from Mus musculus (Mouse).